Consider the following 217-residue polypeptide: Ribonuclease HII (217 aa).

In terms of domain architecture, RNase H type-2 spans 27–216; sequence SRIAGVDEAG…VKESIREGIC (190 aa). D33, E34, and D126 together coordinate a divalent metal cation.

Belongs to the RNase HII family. It depends on Mn(2+) as a cofactor. Mg(2+) serves as cofactor.

It localises to the cytoplasm. It carries out the reaction Endonucleolytic cleavage to 5'-phosphomonoester.. Its function is as follows. Endonuclease that specifically degrades the RNA of RNA-DNA hybrids. In Chlamydia muridarum (strain MoPn / Nigg), this protein is Ribonuclease HII (rnhB).